Here is a 443-residue protein sequence, read N- to C-terminus: Glutamate--tRNA ligase 1 (443 aa).

A 'HIGH' region motif is present at residues 8–18; the sequence is PSPTGRLHVGN. The short motif at 239–243 is the 'KMSKS' region element; that stretch reads KLSKR. Lysine 242 is an ATP binding site.

The protein belongs to the class-I aminoacyl-tRNA synthetase family. Glutamate--tRNA ligase type 1 subfamily. In terms of assembly, monomer.

It is found in the cytoplasm. The enzyme catalyses tRNA(Glu) + L-glutamate + ATP = L-glutamyl-tRNA(Glu) + AMP + diphosphate. Functionally, catalyzes the attachment of glutamate to tRNA(Glu) in a two-step reaction: glutamate is first activated by ATP to form Glu-AMP and then transferred to the acceptor end of tRNA(Glu). The sequence is that of Glutamate--tRNA ligase 1 from Rhizorhabdus wittichii (strain DSM 6014 / CCUG 31198 / JCM 15750 / NBRC 105917 / EY 4224 / RW1) (Sphingomonas wittichii).